The sequence spans 235 residues: Uridylate kinase (235 aa).

Position 12 to 15 (12 to 15 (KISG)) interacts with ATP. G54 is a binding site for UMP. ATP-binding residues include G55 and R59. Residues D72 and 133 to 140 (TGNPFFST) contribute to the UMP site. ATP is bound by residues Y166 and D169.

It belongs to the UMP kinase family. As to quaternary structure, homohexamer.

The protein localises to the cytoplasm. The catalysed reaction is UMP + ATP = UDP + ADP. It functions in the pathway pyrimidine metabolism; CTP biosynthesis via de novo pathway; UDP from UMP (UMPK route): step 1/1. With respect to regulation, inhibited by UTP. Catalyzes the reversible phosphorylation of UMP to UDP. In Acetivibrio thermocellus (strain ATCC 27405 / DSM 1237 / JCM 9322 / NBRC 103400 / NCIMB 10682 / NRRL B-4536 / VPI 7372) (Clostridium thermocellum), this protein is Uridylate kinase.